Here is a 70-residue protein sequence, read N- to C-terminus: Translation initiation factor IF-1 (70 aa).

Residues 1-70 enclose the S1-like domain; that stretch reads MKETNLSIKG…LTKGRIIYRH (70 aa).

It belongs to the IF-1 family. As to quaternary structure, component of the 30S ribosomal translation pre-initiation complex which assembles on the 30S ribosome in the order IF-2 and IF-3, IF-1 and N-formylmethionyl-tRNA(fMet); mRNA recruitment can occur at any time during PIC assembly.

It is found in the cytoplasm. One of the essential components for the initiation of protein synthesis. Stabilizes the binding of IF-2 and IF-3 on the 30S subunit to which N-formylmethionyl-tRNA(fMet) subsequently binds. Helps modulate mRNA selection, yielding the 30S pre-initiation complex (PIC). Upon addition of the 50S ribosomal subunit IF-1, IF-2 and IF-3 are released leaving the mature 70S translation initiation complex. The chain is Translation initiation factor IF-1 from Mycoplasmoides gallisepticum (strain R(low / passage 15 / clone 2)) (Mycoplasma gallisepticum).